We begin with the raw amino-acid sequence, 611 residues long: Protein Pixie (611 aa).

2 consecutive 4Fe-4S ferredoxin-type domains span residues 15 to 45 (RIAI…MGKL) and 54 to 83 (KIAS…IINL). ABC transporter domains follow at residues 78–323 (ITII…FLDG) and 350–570 (IKRM…LELL). ATP-binding positions include 118–125 (GQNGIGKS) and 387–394 (GENGTGKT).

The protein belongs to the ABC transporter superfamily. ABCE family. As to quaternary structure, interacts with components of eIF3 complex, namely eIF3a, eIF3j, eIF3b, eIF3c and eIF3i. Associates with the 40S ribosome subunit in an ATP-dependent manner and independently from the presence of the eIF3 complex. Forms a complex with Git and Pak; the interaction with Pak may be mediated by pix/dPIX. Post-translationally, ubiquitinated by Cnot4. Ubiquitination mediates the recruitment of autophagy receptors to the mitochondrial outer membrane and initiates mitophagy. Expressed in early and late larval imaginal disks (at protein level).

It is found in the cytoplasm. Its function is as follows. Plays a role in translation initiation and quality control of translation. Together with pelo and HBS1, is required for 48S complex formation from 80S ribosomes and dissociation of vacant 80S ribosomes. Stabilizes core components of eIF3 complex promoting their assembly into translation initiation-competent complexes. Together with pelo and HBS1, recognizes stalled ribosomes and promotes dissociation of elongation complexes assembled on non-stop mRNAs; this triggers endonucleolytic cleavage of the mRNA, a mechanism to release non-functional ribosomes and to degrade damaged mRNAs as part of the No-Go Decay (NGD) pathway. Plays a role in the regulation of mRNA turnover. Plays a role in quality control of translation of mitochondrial outer membrane-localized mRNA. As part of the Pink1-regulated signaling, ubiquitinated by Cnot4 upon mitochondria damage; this modification generates polyubiquitin signals that recruits autophagy receptors to the mitochondrial outer membrane to initiate mitophagy. Required in the wing disk for cell division and growth as well as cell survival. During muscle embryogenesis, required for the recruitment of Pak to muscle attachments in the embryo, hence may play a role in proper muscle morphogenesis and proper guidance and targeting of subsets of myotubes. This Drosophila melanogaster (Fruit fly) protein is Protein Pixie.